The following is a 640-amino-acid chain: uncharacterized protein (640 aa).

The region spanning 184–328 (VKRDTIFIIK…KVQRSIDTMI (145 aa)) is the TIR domain. The disordered stretch occupies residues 613–640 (LPNDLDDEDEELDDSTLGRPDSDEEGGE). Residues 616–626 (DLDDEDEELDD) show a composition bias toward acidic residues.

This is an uncharacterized protein from Sinorhizobium fredii (strain NBRC 101917 / NGR234).